Here is a 907-residue protein sequence, read N- to C-terminus: Translation initiation factor IF-2 (907 aa).

A disordered region spans residues Asp26–Asp317. Basic and acidic residues-rich tracts occupy residues Gly28–Lys44 and Ser101–Tyr248. A compositionally biased stretch (basic residues) spans Lys299–Lys308. Positions Pro406–Thr575 constitute a tr-type G domain. The segment at Gly415–Thr422 is G1. Residue Gly415 to Thr422 participates in GTP binding. The interval Gly440 to His444 is G2. The G3 stretch occupies residues Asp461–Gly464. GTP contacts are provided by residues Asp461 to His465 and Asn515 to Asp518. Residues Asn515 to Asp518 are G4. The segment at Ser551–Lys553 is G5.

It belongs to the TRAFAC class translation factor GTPase superfamily. Classic translation factor GTPase family. IF-2 subfamily.

It localises to the cytoplasm. Functionally, one of the essential components for the initiation of protein synthesis. Protects formylmethionyl-tRNA from spontaneous hydrolysis and promotes its binding to the 30S ribosomal subunits. Also involved in the hydrolysis of GTP during the formation of the 70S ribosomal complex. The sequence is that of Translation initiation factor IF-2 from Vibrio vulnificus (strain YJ016).